The primary structure comprises 63 residues: Large ribosomal subunit protein uL29 (63 aa).

The protein belongs to the universal ribosomal protein uL29 family.

The sequence is that of Large ribosomal subunit protein uL29 from Shigella flexneri.